Consider the following 529-residue polypeptide: L-ornithine N(5)-monooxygenase (529 aa).

Residues glutamate 100 to histidine 108 and glutamine 119 each bind FAD. Residue lysine 124 coordinates substrate. Residue valine 185 participates in FAD binding. Asparagine 270–serine 273 provides a ligand contact to NADP(+). Residues asparagine 309–phenylalanine 312 and asparagine 339 each bind substrate. Residue asparagine 339–glycine 341 coordinates NADP(+). Position 493 to 495 (threonine 493 to leucine 495) interacts with FAD. Serine 496 serves as a coordination point for substrate.

It belongs to the lysine N(6)-hydroxylase/L-ornithine N(5)-oxygenase family. In terms of assembly, homotetramer. The cofactor is FAD.

The enzyme catalyses L-ornithine + NADPH + O2 = N(5)-hydroxy-L-ornithine + NADP(+) + H2O. It carries out the reaction L-ornithine + NADH + O2 = N(5)-hydroxy-L-ornithine + NAD(+) + H2O. Its pathway is siderophore biosynthesis. L-ornithine N(5)-monooxygenase; part of the gene cluster that mediates the biosynthesis of hydroxamate-containing siderophores that play a critical role in virulence. Cochliobolus heterostrophus produces extracellular coprogen-type siderophores including coprogen, neocoprogen I and neocoprogen II, as well as the intracellular siderophore ferricrocin. The role of extracellular siderophores is to supply iron to their producers in planta and the intracellular ferricrocin is required for intracellular iron distribution and storage with a crucial role in ascus and ascospore development. SIDA2 catalyzes the conversion of L-ornithine to N(5)-hydroxyornithine, the first step in the biosynthesis of all hydroxamate-containing siderophores. The assembly of extracellular coprogen-type siderophores is then performed by the nonribosomal peptide synthetase (NRPS) NPS6 whereas the intracellular siderophore ferricrocin is assembled by NPS2. In Cochliobolus heterostrophus (strain C4 / ATCC 48331 / race T) (Southern corn leaf blight fungus), this protein is L-ornithine N(5)-monooxygenase.